Consider the following 143-residue polypeptide: Ribonuclease VapC33 (143 aa).

Mg(2+)-binding residues include aspartate 5 and aspartate 108.

It belongs to the PINc/VapC protein family. Requires Mg(2+) as cofactor.

Toxic component of a type II toxin-antitoxin (TA) system. An RNase. Its toxic effect is neutralized by coexpression with cognate antitoxin VapB33. This Mycobacterium tuberculosis (strain CDC 1551 / Oshkosh) protein is Ribonuclease VapC33.